The chain runs to 385 residues: MTAISLGMPDVPTRLAERRKSRQIQVGPVAVGGDAPVSVQSMTTTRTSDIGATLQQIAELTASGCQIVRVACPTQDDADALPVIARKSQIPVIADIHFQPKYVFAAIEAGCAAVRVNPGNIKQFDDKVKEIAKAAKDHGTPIRIGVNAGSLDRRLLQKYGRATPEALAESALWEASLFEEHDFRDIKISVKHNDPVVMVEAYRQLAAQCDYPLHLGVTEAGPAFQGTIKSAVAFGALLSQGIGDTIRVSLSAPPVEEIKVGIQILESLNLRQRGLEIVSCPSCGRAQVDVYKLAEEVTAGLEGMEVPLRVAVMGCVVNGPGEAREADLGVASGNGKGQIFVKGEVIKTVPESKIVETLIDEAMKIAEQMEKDGVTSGEPSVSVAG.

The [4Fe-4S] cluster site is built by C280, C283, C315, and E322.

The protein belongs to the IspG family. The cofactor is [4Fe-4S] cluster.

The enzyme catalyses (2E)-4-hydroxy-3-methylbut-2-enyl diphosphate + oxidized [flavodoxin] + H2O + 2 H(+) = 2-C-methyl-D-erythritol 2,4-cyclic diphosphate + reduced [flavodoxin]. The protein operates within isoprenoid biosynthesis; isopentenyl diphosphate biosynthesis via DXP pathway; isopentenyl diphosphate from 1-deoxy-D-xylulose 5-phosphate: step 5/6. Functionally, converts 2C-methyl-D-erythritol 2,4-cyclodiphosphate (ME-2,4cPP) into 1-hydroxy-2-methyl-2-(E)-butenyl 4-diphosphate. This Streptomyces coelicolor (strain ATCC BAA-471 / A3(2) / M145) protein is 4-hydroxy-3-methylbut-2-en-1-yl diphosphate synthase (flavodoxin) 2.